The primary structure comprises 694 residues: Soluble starch synthase 2-2, chloroplastic/amyloplastic (694 aa).

The N-terminal 15 residues, 1-15 (MSGAIASSPAATLFL), are a transit peptide targeting the chloroplast. The segment at 93–197 (KADHVEDSVS…DSENKESGPL (105 aa)) is disordered. The span at 127 to 142 (APVSKPKVDPSVPASK) shows a compositional bias: low complexity. Residues 156-176 (AALDKKEDVGVAEPLEAKADA) are compositionally biased toward basic and acidic residues. Over residues 177–186 (GGDAGAVSSA) the composition is skewed to low complexity. Lys-217 is an ADP-alpha-D-glucose binding site.

This sequence belongs to the glycosyltransferase 1 family. Bacterial/plant glycogen synthase subfamily. In terms of tissue distribution, expressed in leaves and weakly in endosperm and roots.

Its subcellular location is the plastid. The protein localises to the amyloplast. It is found in the chloroplast. The enzyme catalyses [(1-&gt;4)-alpha-D-glucosyl](n) + ADP-alpha-D-glucose = [(1-&gt;4)-alpha-D-glucosyl](n+1) + ADP + H(+). The protein operates within glycan biosynthesis; starch biosynthesis. In terms of biological role, may contribute to the deposition of transient starch in chloroplasts of leaves. This Oryza sativa subsp. japonica (Rice) protein is Soluble starch synthase 2-2, chloroplastic/amyloplastic (SSII-2).